Reading from the N-terminus, the 182-residue chain is uncharacterized protein (182 aa).

This is an uncharacterized protein from Acanthamoeba polyphaga mimivirus (APMV).